Here is a 514-residue protein sequence, read N- to C-terminus: MAMAAAAAVASQGLVAASTQQQKKTSAKLSCNAAPVFSGKSFLRVKSGSNGAVRVRNVGVRCEAQAIERESVKADTGSGREEDAFSGLKQVCAVLGTQWGDEGKGKLVDILAQRFDVVARCQGGANAGHTIYNDKGEKFALHLVPSGILNEKTTCVVGNGVVIHLPGFFKEIDNLESKGVNTSGRLLVSDRAHLLFNLHQEVDGLREAELAGQMIGTTKRGIGPCYASKAIRNGIRVGDLRHLDTFREKLDILFRDAAARFKGFEYSAAAVDAEMEMYVKYAERLEHYIVDTVDYVNTAYAEGKRILIEGGQATMLDIDFGTYPFVTSSNPSVGGICTGLGMAPNRLGDIVGVAKAYTTRVGSGPYPTELFGEEGEELRKAGFEWGTTTGRPRRCGWLDIVALNFACTINGFTAINLTKLDVLSGLPEVKLGVAYRTQSGEKLRSFPADLSILEQVEVEYETLEAWKEDITKVRSYAELPVAAQKYVERIEELIGLPCQYIGVGPGRDALIVKQ.

Residues 1 to 73 (MAMAAAAAVA…AQAIERESVK (73 aa)) constitute a chloroplast transit peptide. Residues 100-106 (GDEGKGK) and 128-130 (GHT) contribute to the GTP site. D101 acts as the Proton acceptor in catalysis. Residues D101 and G128 each coordinate Mg(2+). IMP-binding positions include 101–104 (DEGK), 126–129 (NAGH), T218, R232, Q312, T327, and R391. Residue H129 is the Proton donor of the active site. A substrate-binding site is contributed by 387–393 (TTTGRPR). Residues R393, 419–421 (KLD), and 502–504 (GVG) each bind GTP.

This sequence belongs to the adenylosuccinate synthetase family. In terms of assembly, homodimer. Mg(2+) is required as a cofactor.

It is found in the plastid. Its subcellular location is the chloroplast. It catalyses the reaction IMP + L-aspartate + GTP = N(6)-(1,2-dicarboxyethyl)-AMP + GDP + phosphate + 2 H(+). It participates in purine metabolism; AMP biosynthesis via de novo pathway; AMP from IMP: step 1/2. In terms of biological role, plays an important role in the de novo pathway and in the salvage pathway of purine nucleotide biosynthesis. Catalyzes the first committed step in the biosynthesis of AMP from IMP. The sequence is that of Adenylosuccinate synthetase 1, chloroplastic from Physcomitrium patens (Spreading-leaved earth moss).